Reading from the N-terminus, the 334-residue chain is Holliday junction branch migration complex subunit RuvB (334 aa).

Positions 1–182 are large ATPase domain (RuvB-L); that stretch reads MDERLVSSEA…FGVMSRLEYY (182 aa). ATP contacts are provided by residues Leu21, Arg22, Gly63, Lys66, Thr67, Thr68, 129–131, Arg172, Tyr182, and Arg219; that span reads EDF. Residue Thr67 coordinates Mg(2+). The tract at residues 183 to 253 is small ATPAse domain (RuvB-S); that stretch reads TQEELADIVT…ISQNALERLQ (71 aa). The tract at residues 256 to 334 is head domain (RuvB-H); that stretch reads RLGLDHIDHK…HFQMEAPRYD (79 aa). Positions 311 and 316 each coordinate DNA.

The protein belongs to the RuvB family. As to quaternary structure, homohexamer. Forms an RuvA(8)-RuvB(12)-Holliday junction (HJ) complex. HJ DNA is sandwiched between 2 RuvA tetramers; dsDNA enters through RuvA and exits via RuvB. An RuvB hexamer assembles on each DNA strand where it exits the tetramer. Each RuvB hexamer is contacted by two RuvA subunits (via domain III) on 2 adjacent RuvB subunits; this complex drives branch migration. In the full resolvosome a probable DNA-RuvA(4)-RuvB(12)-RuvC(2) complex forms which resolves the HJ. Homohexamer which interacts with RecU.

It localises to the cytoplasm. It catalyses the reaction ATP + H2O = ADP + phosphate + H(+). Functionally, the RuvA-RuvB-RuvC complex processes Holliday junction (HJ) DNA during genetic recombination and DNA repair, while the RuvA-RuvB complex plays an important role in the rescue of blocked DNA replication forks via replication fork reversal (RFR). RuvA specifically binds to HJ cruciform DNA, conferring on it an open structure. The RuvB hexamer acts as an ATP-dependent pump, pulling dsDNA into and through the RuvAB complex. RuvB forms 2 homohexamers on either side of HJ DNA bound by 1 or 2 RuvA tetramers; 4 subunits per hexamer contact DNA at a time. Coordinated motions by a converter formed by DNA-disengaged RuvB subunits stimulates ATP hydrolysis and nucleotide exchange. Immobilization of the converter enables RuvB to convert the ATP-contained energy into a lever motion, pulling 2 nucleotides of DNA out of the RuvA tetramer per ATP hydrolyzed, thus driving DNA branch migration. The RuvB motors rotate together with the DNA substrate, which together with the progressing nucleotide cycle form the mechanistic basis for DNA recombination by continuous HJ branch migration. Branch migration allows RuvC to scan DNA until it finds its consensus sequence, where it cleaves and resolves cruciform DNA. The sequence is that of Holliday junction branch migration complex subunit RuvB from Bacillus subtilis (strain 168).